A 157-amino-acid polypeptide reads, in one-letter code: uncharacterized protein (157 aa).

The region spanning 9 to 146 (LLINYKTLDE…GDFYVWHPET (138 aa)) is the N-acetyltransferase domain.

This is an uncharacterized protein from Bacillus cereus (strain AH187).